Consider the following 101-residue polypeptide: Large ribosomal subunit protein bL9m (101 aa).

The transit peptide at 1–32 (MSIMKPTTRFFRFNSLELAVSPFQRIYGQLRF) directs the protein to the mitochondrion.

Belongs to the bacterial ribosomal protein bL9 family. In terms of assembly, component of the mitochondrial large ribosomal subunit (mt-LSU). Mature yeast 74S mitochondrial ribosomes consist of a small (37S) and a large (54S) subunit. The 37S small subunit contains a 15S ribosomal RNA (15S mt-rRNA) and at least 32 different proteins. The 54S large subunit contains a 21S rRNA (21S mt-rRNA) and at least 45 different proteins.

Its subcellular location is the mitochondrion. In terms of biological role, component of the mitochondrial ribosome (mitoribosome), a dedicated translation machinery responsible for the synthesis of mitochondrial genome-encoded proteins, including at least some of the essential transmembrane subunits of the mitochondrial respiratory chain. The mitoribosomes are attached to the mitochondrial inner membrane and translation products are cotranslationally integrated into the membrane. This chain is Large ribosomal subunit protein bL9m, found in Schizosaccharomyces pombe (strain 972 / ATCC 24843) (Fission yeast).